A 443-amino-acid polypeptide reads, in one-letter code: uncharacterized protein (443 aa).

Residues His-164 and Asp-386 each act as proton acceptor in the active site.

This sequence belongs to the plant acyltransferase family.

This is an uncharacterized protein from Arabidopsis thaliana (Mouse-ear cress).